Reading from the N-terminus, the 87-residue chain is uncharacterized protein (87 aa).

The N-terminal stretch at 1 to 26 (MMSTQHFILSLTILIIISNLHDEVNA) is a signal peptide. Disulfide bonds link Cys61/Cys75, Cys68/Cys79, and Cys74/Cys84.

Its subcellular location is the secreted. This is an uncharacterized protein from Schistosoma japonicum (Blood fluke).